Here is a 358-residue protein sequence, read N- to C-terminus: tRNA-specific 2-thiouridylase MnmA (358 aa).

Residues 6–13 (ALSGGVDS) and methionine 32 each bind ATP. The Nucleophile role is filled by cysteine 103. Residues cysteine 103 and cysteine 201 are joined by a disulfide bond. Glycine 127 is an ATP binding site. An interaction with tRNA region spans residues 151-153 (KDQ). The active-site Cysteine persulfide intermediate is the cysteine 201.

This sequence belongs to the MnmA/TRMU family.

The protein resides in the cytoplasm. The catalysed reaction is S-sulfanyl-L-cysteinyl-[protein] + uridine(34) in tRNA + AH2 + ATP = 2-thiouridine(34) in tRNA + L-cysteinyl-[protein] + A + AMP + diphosphate + H(+). Catalyzes the 2-thiolation of uridine at the wobble position (U34) of tRNA, leading to the formation of s(2)U34. This Thermotoga neapolitana (strain ATCC 49049 / DSM 4359 / NBRC 107923 / NS-E) protein is tRNA-specific 2-thiouridylase MnmA.